The primary structure comprises 344 residues: tRNA(Ile)-lysidine synthase (344 aa).

35–40 (SGGPDS) provides a ligand contact to ATP.

It belongs to the tRNA(Ile)-lysidine synthase family.

The protein localises to the cytoplasm. The catalysed reaction is cytidine(34) in tRNA(Ile2) + L-lysine + ATP = lysidine(34) in tRNA(Ile2) + AMP + diphosphate + H(+). Its function is as follows. Ligates lysine onto the cytidine present at position 34 of the AUA codon-specific tRNA(Ile) that contains the anticodon CAU, in an ATP-dependent manner. Cytidine is converted to lysidine, thus changing the amino acid specificity of the tRNA from methionine to isoleucine. In Methylobacterium sp. (strain 4-46), this protein is tRNA(Ile)-lysidine synthase.